The primary structure comprises 223 residues: DNA-directed RNA polymerase III subunit RPC7 (223 aa).

A disordered region spans residues 110 to 223 (MMPRNKCKKA…SDDNMDEATY (114 aa)). Positions 114 to 125 (NKCKKAGPKPKK) are enriched in basic residues. Threonine 133 carries the post-translational modification Phosphothreonine. The span at 140-155 (DVLKKMEELEKRGDGE) shows a compositional bias: basic and acidic residues. Serine 157 is modified (phosphoserine). A compositionally biased stretch (basic and acidic residues) spans 164 to 173 (KEGSKEKSKE). Acidic residues-rich tracts occupy residues 174 to 198 (GDDD…EEND) and 205 to 223 (EDGD…EATY).

This sequence belongs to the eukaryotic RPC7 RNA polymerase subunit family. In terms of assembly, component of the RNA polymerase III complex consisting of 17 subunits: a ten-subunit horseshoe-shaped catalytic core composed of POLR3A/RPC1, POLR3B/RPC2, POLR1C/RPAC1, POLR1D/RPAC2, POLR3K/RPC10, POLR2E/RPABC1, POLR2F/RPABC2, POLR2H/RPABC3, POLR2K/RPABC4 and POLR2L/RPABC5; a mobile stalk composed of two subunits POLR3H/RPC8 and CRCP/RPC9, protruding from the core and functioning primarily in transcription initiation; and additional subunits homologous to general transcription factors of the RNA polymerase II machinery, POLR3C/RPC3-POLR3F/RPC6-POLR3G/RPC7 heterotrimer required for transcription initiation and POLR3D/RPC4-POLR3E/RPC5 heterodimer involved in both transcription initiation and termination. Directly interacts with POLR3C/RPC62. Also found in a trimeric complex with POLR3C/RPC3 and POLR3GL. In terms of tissue distribution, barely detectable in differentiated tissues. Expressed in embryonic stem cells and in other dividing cells, such as some tumor cell lines.

The protein resides in the nucleus. It is found in the cytoplasm. In terms of biological role, DNA-dependent RNA polymerase catalyzes the transcription of DNA into RNA using the four ribonucleoside triphosphates as substrates. Specific peripheric component of RNA polymerase III (Pol III) which synthesizes small non-coding RNAs including 5S rRNA, snRNAs, tRNAs and miRNAs from at least 500 distinct genomic loci. Acts as a long tether that bridges POLR3C/RPC3-POLR3F/RPC6-POLR3G/RPC7 heterotrimer and the mobile stalk of Pol III, coordinating the dynamics of Pol III stalk and clamp modules during the transition from apo to elongation state. Pol III exists as two alternative complexes defined by the mutually exclusive incorporation of subunit POLR3G/RPC7alpha or POLR3GL/RPC7beta. POLR3G/RPC7alpha modulates Pol III transcriptome by specifically enhancing the transcription of snaR-A non-coding RNAs. At resting state, occupies the active site of apo Pol III and keeps Pol III in an autoinhibitory mode, preventing non-specific transcription. Pol III plays a key role in sensing and limiting infection by intracellular bacteria and DNA viruses. Acts as a nuclear and cytosolic DNA sensor involved in innate immune response. Can sense non-self dsDNA that serves as template for transcription into dsRNA. The non-self RNA polymerase III transcripts, such as Epstein-Barr virus-encoded RNAs (EBERs), induce type I interferon and NF-kappa-B through the RIG-I pathway. In Homo sapiens (Human), this protein is DNA-directed RNA polymerase III subunit RPC7.